A 333-amino-acid chain; its full sequence is Glycerol-3-phosphate dehydrogenase [NAD(P)+] (333 aa).

NADPH-binding residues include Trp12, Lys33, and Lys105. The sn-glycerol 3-phosphate site is built by Lys105, Gly136, and Ser138. Residue Ala140 participates in NADPH binding. Sn-glycerol 3-phosphate is bound by residues Lys191, Asp244, Ser254, Arg255, and Asn256. The Proton acceptor role is filled by Lys191. Arg255 lines the NADPH pocket. Val279 and Glu281 together coordinate NADPH.

It belongs to the NAD-dependent glycerol-3-phosphate dehydrogenase family.

It localises to the cytoplasm. The catalysed reaction is sn-glycerol 3-phosphate + NAD(+) = dihydroxyacetone phosphate + NADH + H(+). It catalyses the reaction sn-glycerol 3-phosphate + NADP(+) = dihydroxyacetone phosphate + NADPH + H(+). Its pathway is membrane lipid metabolism; glycerophospholipid metabolism. In terms of biological role, catalyzes the reduction of the glycolytic intermediate dihydroxyacetone phosphate (DHAP) to sn-glycerol 3-phosphate (G3P), the key precursor for phospholipid synthesis. This Protochlamydia amoebophila (strain UWE25) protein is Glycerol-3-phosphate dehydrogenase [NAD(P)+].